Here is a 243-residue protein sequence, read N- to C-terminus: Probable transcriptional regulatory protein LJ_0904 (243 aa).

Positions 1–22 (MSGHSKWHNIQGRKNAQDAKRG) are disordered.

The protein belongs to the TACO1 family.

The protein resides in the cytoplasm. In Lactobacillus johnsonii (strain CNCM I-12250 / La1 / NCC 533), this protein is Probable transcriptional regulatory protein LJ_0904.